We begin with the raw amino-acid sequence, 352 residues long: Tropomodulin-3 (352 aa).

Ser-25 is subject to Phosphoserine.

The protein belongs to the tropomodulin family. Binds to the N-terminus of tropomyosin and to actin. Interacts with FLII. In terms of tissue distribution, ubiquitous.

It localises to the cytoplasm. It is found in the cytoskeleton. Functionally, blocks the elongation and depolymerization of the actin filaments at the pointed end. The Tmod/TM complex contributes to the formation of the short actin protofilament, which in turn defines the geometry of the membrane skeleton. In Homo sapiens (Human), this protein is Tropomodulin-3 (TMOD3).